Reading from the N-terminus, the 31-residue chain is Protamine-Z (31 aa).

Positions 1 to 31 (ARRRRSRRASRPVRRRRPRRVSRRRRARRRR) are disordered.

Testis.

It is found in the nucleus. It localises to the chromosome. Protamines substitute for histones in the chromatin of sperm during the haploid phase of spermatogenesis. They compact sperm DNA into a highly condensed, stable and inactive complex. The chain is Protamine-Z from Clupea harengus (Atlantic herring).